The primary structure comprises 154 residues: MKLRDSLAENKSIRLQAEAETWQDAVKIGVDLLVAADVVEPRYYQAILDAVEQHGPYFVLAPGLAMPHGRPEEGVKKTGFALVTLKKPLEFNHEDNDPVDILITMAAVDANTHQEVGIMQIVNLFEDEENFDRLRACRTEQEVLDLIDRTNAAA.

The region spanning 6–150 (SLAENKSIRL…QEVLDLIDRT (145 aa)) is the PTS EIIA type-2 domain. His-68 functions as the Tele-phosphohistidine intermediate in the catalytic mechanism. A Phosphohistidine modification is found at His-68.

It is found in the cytoplasm. Functionally, the phosphoenolpyruvate-dependent sugar phosphotransferase system (sugar PTS), a major carbohydrate active transport system, catalyzes the phosphorylation of incoming sugar substrates concomitantly with their translocation across the cell membrane. The enzyme II UlaABC PTS system is involved in ascorbate transport. In Shigella boydii serotype 4 (strain Sb227), this protein is Ascorbate-specific PTS system EIIA component (ulaC).